The sequence spans 156 residues: Zinc metalloproteinase-disintegrin jararin (156 aa).

The 67-residue stretch at 1 to 67 (FVANRMAHEL…NYYGCLLNEP (67 aa)) folds into the Peptidase M12B domain. Histidine 8 lines the Zn(2+) pocket. Glutamate 9 is an active-site residue. Histidine 12 lines the Zn(2+) pocket. Disulfide bonds link cysteine 23/cysteine 47, cysteine 25/cysteine 30, cysteine 78/cysteine 97, cysteine 89/cysteine 107, cysteine 91/cysteine 102, cysteine 101/cysteine 124, cysteine 115/cysteine 121, cysteine 120/cysteine 145, and cysteine 133/cysteine 152. A Disintegrin domain is found at 75–156 (PPFCGNYYPE…GQSGDCPRNS (82 aa)). Over residues 136–145 (GRGDNPDDRC) the composition is skewed to basic and acidic residues. Residues 136–156 (GRGDNPDDRCTGQSGDCPRNS) form a disordered region. The Cell attachment site signature appears at 137-139 (RGD). Residues 146 to 156 (TGQSGDCPRNS) are compositionally biased toward polar residues.

Belongs to the venom metalloproteinase (M12B) family. P-II subfamily. P-IIb sub-subfamily. In terms of assembly, monomer. Zn(2+) serves as cofactor. As to expression, expressed by the venom gland.

The protein localises to the secreted. Its function is as follows. Snake venom zinc metalloproteinase that inhibits ADP-induced platelet aggregation (probably by binding integrin alpha-IIb/beta-3 (ITGA2B/ITGB3)) and degrades fibrinogen. This is Zinc metalloproteinase-disintegrin jararin from Bothrops jararaca (Jararaca).